Consider the following 348-residue polypeptide: 4-hydroxy-3-methylbut-2-en-1-yl diphosphate synthase (flavodoxin) (348 aa).

[4Fe-4S] cluster is bound by residues cysteine 263, cysteine 266, cysteine 298, and glutamate 305.

Belongs to the IspG family. [4Fe-4S] cluster is required as a cofactor.

It catalyses the reaction (2E)-4-hydroxy-3-methylbut-2-enyl diphosphate + oxidized [flavodoxin] + H2O + 2 H(+) = 2-C-methyl-D-erythritol 2,4-cyclic diphosphate + reduced [flavodoxin]. Its pathway is isoprenoid biosynthesis; isopentenyl diphosphate biosynthesis via DXP pathway; isopentenyl diphosphate from 1-deoxy-D-xylulose 5-phosphate: step 5/6. Its function is as follows. Converts 2C-methyl-D-erythritol 2,4-cyclodiphosphate (ME-2,4cPP) into 1-hydroxy-2-methyl-2-(E)-butenyl 4-diphosphate. This Dehalococcoides mccartyi (strain CBDB1) protein is 4-hydroxy-3-methylbut-2-en-1-yl diphosphate synthase (flavodoxin).